Reading from the N-terminus, the 399-residue chain is Phosphoglycerate kinase (399 aa).

Substrate is bound by residues 24-26, Arg41, 64-67, Arg123, and Arg160; these read DLN and HLGR. ATP contacts are provided by residues Lys210, Gly298, Glu329, and 355–358; that span reads GGDS.

This sequence belongs to the phosphoglycerate kinase family. Monomer.

The protein localises to the cytoplasm. It carries out the reaction (2R)-3-phosphoglycerate + ATP = (2R)-3-phospho-glyceroyl phosphate + ADP. Its pathway is carbohydrate degradation; glycolysis; pyruvate from D-glyceraldehyde 3-phosphate: step 2/5. The chain is Phosphoglycerate kinase from Salinispora tropica (strain ATCC BAA-916 / DSM 44818 / JCM 13857 / NBRC 105044 / CNB-440).